We begin with the raw amino-acid sequence, 193 residues long: uncharacterized protein (193 aa).

A disordered region spans residues 1–144 (MEKKRTLSVN…NNNNNNEGTI (144 aa)). Low complexity predominate over residues 29 to 86 (NSLNNIENNECNNNNNNNNNNNNNNSNSNNLNNSNNNNINTSSNSINSSNSINNSIDN). The segment covering 103 to 118 (KMNSSQEFQSYLTPNK) has biased composition (polar residues). Residues 119–140 (NNNNRNNNNRNNNNNNNNNNNN) show a composition bias toward low complexity. The chain crosses the membrane as a helical span at residues 158–180 (YMIRPFLVGASASFGISIGMFYF).

The protein localises to the membrane. This is an uncharacterized protein from Dictyostelium discoideum (Social amoeba).